A 603-amino-acid chain; its full sequence is Zinc finger protein 415 (603 aa).

A C2H2-type 1; degenerate zinc finger spans residues 264 to 286 (YRYIECDKALNHGSHMTVRQVSH). 11 C2H2-type zinc fingers span residues 292–314 (YKCDLCGKVFSQKSNLARHWRVH), 320–342 (YKCNECDRSFSRNSCLALHRRVH), 348–370 (YKCYECDKVFSRNSCLALHQKTH), 376–398 (YTCKECGKAFSVRSTLTNHQVIH), 404–426 (YKCNECGKVFSQTSSLATHQRIH), 432–454 (YKCNECGKVFSQTSSLARHWRIH), 460–482 (YKCNECGKVFSYNSHLASHRRVH), 488–510 (YKCNECGKAFSVHSNLTTHQVIH), 516–538 (YKCNQCGKGFSVHSSLTTHQVIH), 544–566 (YKCNECGKSFSVRPNLTRHQIIH), and 572–594 (YKCSDCGKSFSVRPNLFRHQIIH).

Expressed in all tissues examined. Isoforms are differentially expressed. Isoform 3 and isoform 5 were highly expressed, isoform 4 moderately expressed, isoform 2 lower expression, the lowest expression level was seem with isoform 1.

It is found in the nucleus. The protein localises to the cytoplasm. In terms of biological role, involved in transcriptional regulation. Transcriptional activity differed among the various isoforms. All isoforms except isoform 3 seem to suppresses the transcriptional activities of AP-1 and p53/TP53. In Homo sapiens (Human), this protein is Zinc finger protein 415 (ZNF415).